The chain runs to 401 residues: Argininosuccinate synthase (401 aa).

ATP is bound at residue 9-17; sequence AYSGGLDTS. An L-citrulline-binding site is contributed by tyrosine 86. Glycine 116 lines the ATP pocket. Threonine 118, asparagine 122, and aspartate 123 together coordinate L-aspartate. Asparagine 122 is a binding site for L-citrulline. L-citrulline contacts are provided by arginine 126, serine 174, serine 183, glutamate 259, and tyrosine 271.

It belongs to the argininosuccinate synthase family. Type 1 subfamily. In terms of assembly, homotetramer.

Its subcellular location is the cytoplasm. It catalyses the reaction L-citrulline + L-aspartate + ATP = 2-(N(omega)-L-arginino)succinate + AMP + diphosphate + H(+). The protein operates within amino-acid biosynthesis; L-arginine biosynthesis; L-arginine from L-ornithine and carbamoyl phosphate: step 2/3. This Bacillus cereus (strain AH187) protein is Argininosuccinate synthase.